A 118-amino-acid chain; its full sequence is Vitelline membrane protein Vm32E (118 aa).

An N-terminal signal peptide occupies residues 1–17; it reads MKIVALTLVAFVALAGA. In terms of domain architecture, VM spans 36–75; that stretch reads GYPAPPCPTNYLFSCQPNLAPAPCAQEAQAPAYGSAGAYT.

It belongs to the vitelline membrane family.

The protein localises to the secreted. Major early eggshell protein. The chain is Vitelline membrane protein Vm32E from Drosophila mauritiana (Fruit fly).